A 723-amino-acid chain; its full sequence is Catalase-peroxidase (723 aa).

Residues 89–212 (WHSAGTYRTG…LAAVQMGLIY (124 aa)) constitute a cross-link (tryptophyl-tyrosyl-methioninium (Trp-Tyr) (with M-238)). Histidine 90 functions as the Proton acceptor in the catalytic mechanism. The tryptophyl-tyrosyl-methioninium (Tyr-Met) (with W-89) cross-link spans 212-238 (YVNPEGPNGDPDPFAAAVDIRETFARM). Histidine 253 contacts heme b.

It belongs to the peroxidase family. Peroxidase/catalase subfamily. In terms of assembly, homodimer or homotetramer. Heme b serves as cofactor. In terms of processing, formation of the three residue Trp-Tyr-Met cross-link is important for the catalase, but not the peroxidase activity of the enzyme.

It carries out the reaction H2O2 + AH2 = A + 2 H2O. The enzyme catalyses 2 H2O2 = O2 + 2 H2O. In terms of biological role, bifunctional enzyme with both catalase and broad-spectrum peroxidase activity. The sequence is that of Catalase-peroxidase from Shewanella baltica (strain OS185).